The following is a 79-amino-acid chain: Serine protease inhibitor Kazal-type 1 (79 aa).

A signal peptide spans 1 to 23; the sequence is MKVTGIFLLSALALLSLSGNTGA. Positions 26–79 constitute a Kazal-like domain; the sequence is LGREAKCYNELNGCTKIYDPVCGTDGNTYPNECVLCFENRKRQTSILIQKSGPC. 3 disulfides stabilise this stretch: cysteine 32–cysteine 61, cysteine 39–cysteine 58, and cysteine 47–cysteine 79.

It localises to the secreted. Serine protease inhibitor which exhibits anti-trypsin activity. In the pancreas, protects against trypsin-catalyzed premature activation of zymogens. Functionally, in the male reproductive tract, binds to sperm heads where it modulates sperm capacitance by inhibiting calcium uptake and nitrogen oxide (NO) production. The polypeptide is Serine protease inhibitor Kazal-type 1 (SPINK1) (Homo sapiens (Human)).